A 62-amino-acid chain; its full sequence is DNA-directed RNA polymerase subunit Rpo10 (62 aa).

Residues cysteine 6, cysteine 9, cysteine 43, and cysteine 44 each coordinate Zn(2+).

Belongs to the archaeal Rpo10/eukaryotic RPB10 RNA polymerase subunit family. In terms of assembly, part of the RNA polymerase complex. Zn(2+) is required as a cofactor.

The protein resides in the cytoplasm. It catalyses the reaction RNA(n) + a ribonucleoside 5'-triphosphate = RNA(n+1) + diphosphate. DNA-dependent RNA polymerase (RNAP) catalyzes the transcription of DNA into RNA using the four ribonucleoside triphosphates as substrates. The sequence is that of DNA-directed RNA polymerase subunit Rpo10 from Methanosarcina acetivorans (strain ATCC 35395 / DSM 2834 / JCM 12185 / C2A).